The sequence spans 446 residues: Putative diacyglycerol O-acyltransferase Rv3371 (446 aa).

Catalysis depends on His-129, which acts as the Proton acceptor. Residues Ser-425–His-446 form a disordered region.

Belongs to the long-chain O-acyltransferase family.

It catalyses the reaction an acyl-CoA + a 1,2-diacyl-sn-glycerol = a triacyl-sn-glycerol + CoA. It carries out the reaction di-(9Z)-octadecenoylglycerol + (9Z)-octadecenoyl-CoA = 1,2,3-tri-(9Z-octadecenoyl)-glycerol + CoA. It participates in glycerolipid metabolism; triacylglycerol biosynthesis. Catalyzes the terminal and only committed step in triacylglycerol synthesis by using diacylglycerol and fatty acyl CoA as substrates. Required for storage lipid synthesis. Functionally, upon expression in E.coli functions weakly as a triacylglycerol synthase, making triacylglycerol (TG) from diolein and long-chain fatty acyl-CoA. Has no wax synthase activity to produce wax esters. This is Putative diacyglycerol O-acyltransferase Rv3371 from Mycobacterium tuberculosis (strain ATCC 25618 / H37Rv).